Here is a 114-residue protein sequence, read N- to C-terminus: uncharacterized protein (114 aa).

The HTH arsR-type domain occupies glutamate 2–leucine 97. The H-T-H motif DNA-binding region spans glycine 37–arginine 60.

This is an uncharacterized protein from Mycobacterium tuberculosis (strain CDC 1551 / Oshkosh).